Consider the following 151-residue polypeptide: MESYGLGQLKNFEYLDHTADIMFHTWGKDLKEALEQMVLIMNNYMVELDSVELDDSATEQTISVNGHDMDSLLFALLDEFLFVFSTEFIIFKQVQIISFDRENFSIKAIGKGVELDKSKHTTGTEIKAITYSCMKIEENPDKSDIHVIVDI.

D20, D150, and I151 together coordinate Ca(2+).

The protein belongs to the archease family.

Functionally, component of the tRNA-splicing ligase complex required to facilitate the enzymatic turnover of catalytic subunit RtcB. In Dictyostelium discoideum (Social amoeba), this protein is Protein archease-like.